The chain runs to 314 residues: Solute carrier family 25 member 44 (314 aa).

3 Solcar repeats span residues 18 to 100, 107 to 210, and 220 to 302; these read KKFY…TRKF, SNTV…YAEQ, and PHIV…LKKL. Helical transmembrane passes span 20–42, 71–90, 113–133, 185–201, 222–239, and 278–296; these read FYVFGVAMTMMIRVSVYPFTLIR, AGLYRGFLVNTFTLISGQCY, LVAGGSASLVAQSITVPIDVV, GYVASLLTYIPNSAVWW, IVFQAISGPLAAATASIL, and LSARIISATPSTIVIVVGY.

It belongs to the mitochondrial carrier (TC 2.A.29) family. As to expression, highly expressed in brown adipose tissues compared with other metabolic organs.

The protein localises to the mitochondrion membrane. It catalyses the reaction L-valine(in) = L-valine(out). It carries out the reaction L-leucine(in) = L-leucine(out). Mitochondrial solute transporter which transports branched-chain amino acid (BCAA; valine, leucine and isoleucine) into mitochondria in brown adipose tissue (BAT). BAT is involved in BCAA catabolism and actively utilizes BCAA in the mitochondria for thermogenesis. The protein is Solute carrier family 25 member 44 of Mus musculus (Mouse).